Consider the following 143-residue polypeptide: Synuclein (143 aa).

Tandem repeats lie at residues 20–30 (EKTKQGVQDAA), 31–41 (EKTKQGVQDAA), and 42–52 (EKTKEGVMYVG). Positions 20-78 (EKTKQGVQDAAEKTKQGVQDAAEKTKEGVMYVGTKTKEGVVQSVNTVTEKTKEQANVVG) are 5 X 11 AA tandem repeats of [EGST]-K-T-K-[EQ]-[GQ]-[VA]-X(4). A 4; approximate repeat occupies 53–67 (TKTKEGVVQSVNTVT). The stretch at 68-78 (EKTKEQANVVG) is repeat 5. A disordered region spans residues 113-143 (REIPAEQVAEGKQTTQEPLVEATEATEETGK).

It belongs to the synuclein family. Nervous system tissue. Found in the electric lobe, the brain and the spinal cord.

Its subcellular location is the nucleus. Its function is as follows. May have a role in synaptic regulation or signal transduction. The chain is Synuclein from Tetronarce californica (Pacific electric ray).